Reading from the N-terminus, the 101-residue chain is Integration host factor subunit beta (101 aa).

The segment at 57–77 (PARAGRNPRTGAHVPVDQKSV) is disordered.

This sequence belongs to the bacterial histone-like protein family. In terms of assembly, heterodimer of an alpha and a beta chain.

Its function is as follows. This protein is one of the two subunits of integration host factor, a specific DNA-binding protein that functions in genetic recombination as well as in transcriptional and translational control. The polypeptide is Integration host factor subunit beta (Rhodopseudomonas palustris (strain HaA2)).